Consider the following 270-residue polypeptide: Release factor glutamine methyltransferase (270 aa).

Residues 112 to 116, Asp135, Trp162, and Asn178 each bind S-adenosyl-L-methionine; that span reads GTGSG. Substrate is bound at residue 178–181; sequence NPPY.

The protein belongs to the protein N5-glutamine methyltransferase family. PrmC subfamily.

The enzyme catalyses L-glutaminyl-[peptide chain release factor] + S-adenosyl-L-methionine = N(5)-methyl-L-glutaminyl-[peptide chain release factor] + S-adenosyl-L-homocysteine + H(+). Functionally, methylates the class 1 translation termination release factors RF1/PrfA and RF2/PrfB on the glutamine residue of the universally conserved GGQ motif. The polypeptide is Release factor glutamine methyltransferase (Bordetella pertussis (strain Tohama I / ATCC BAA-589 / NCTC 13251)).